A 1342-amino-acid polypeptide reads, in one-letter code: DNA-directed RNA polymerase subunit beta (1342 aa).

This sequence belongs to the RNA polymerase beta chain family. The RNAP catalytic core consists of 2 alpha, 1 beta, 1 beta' and 1 omega subunit. When a sigma factor is associated with the core the holoenzyme is formed, which can initiate transcription.

The enzyme catalyses RNA(n) + a ribonucleoside 5'-triphosphate = RNA(n+1) + diphosphate. Its function is as follows. DNA-dependent RNA polymerase catalyzes the transcription of DNA into RNA using the four ribonucleoside triphosphates as substrates. This chain is DNA-directed RNA polymerase subunit beta, found in Salmonella typhimurium (strain LT2 / SGSC1412 / ATCC 700720).